The chain runs to 1683 residues: A-kinase anchor protein SPHKAP (1683 aa).

Polar residues-rich tracts occupy residues 1 to 14 (MDVN…SNVE) and 289 to 301 (AENT…NPSA). Disordered stretches follow at residues 1–30 (MDVN…ITSS), 275–320 (RMPS…ATNY), and 582–601 (LLPT…LVTE). Positions 910–927 (FAEELAETVVSMATEIAA) are PKA-RII subunit binding domain. The disordered stretch occupies residues 960–983 (LKRKKENSGTGSTVRKHKPPRLSE). Residues S1006, S1066, S1088, S1101, S1102, S1105, S1240, and S1269 each carry the phosphoserine modification. Disordered stretches follow at residues 1359–1387 (VTEG…PTRE) and 1415–1518 (ETDQ…DTSS). A compositionally biased stretch (polar residues) spans 1362–1371 (GNCSPVSSPS). Residues 1469–1490 (LETREELEVDVLKEDITLDESR) show a composition bias toward basic and acidic residues. Positions 1492 to 1504 (PPSSSEESTGSWS) are enriched in low complexity.

The protein belongs to the AKAP110 family. In terms of assembly, interacts (via the PKA-RII subunit binding domain) with the RI subunit of PKA. Interacts with SPHK1; the interaction greatly reduces SPHK1 activity. In terms of tissue distribution, abundant in heart ventricle (at protein level).

It is found in the cytoplasm. In terms of biological role, anchoring protein that binds preferentially to the type I regulatory subunit of c-AMP-dependent protein kinase (PKA type I) and targets it to distinct subcellular compartments. May act as a converging factor linking cAMP and sphingosine signaling pathways. Plays a regulatory role in the modulation of SPHK1. The polypeptide is A-kinase anchor protein SPHKAP (Sphkap) (Rattus norvegicus (Rat)).